Consider the following 344-residue polypeptide: MIKVGVVGYGTIGKRIADAVALQDDMRVVGVVKMTPDYEAKIAAARGFPVYTAADRVEKFKKAGIEVAGTVEDLVKASDVVVDASPEDVGRENKEKYYRQLDKRYIFQGGEEADVAEVSFNALANYDEARGKRYIRVVSCNTTGITRVLSALLLNGIGIRKARIFIARRGADPKEHKKGPINDVVPNPTAVPSHHGPDVQTVLKDVDIVTMAVAVPVTIMHMHMAYIELDGPRSRDEVLEAFAKTPRIFLADVGSGFQSLAQFIEYARDLGRPRGDFPEVAVFRDSVTVRGDELYLMYGVHQESIVVPENVDAIRAALGVLPKWQSIEKTDKSLKLFTEGKRYA.

Residues 11–12 and glycine 110 each bind NAD(+); that span reads TI. Residue 139-141 participates in D-glyceraldehyde 3-phosphate binding; sequence SCN. The Nucleophile role is filled by cysteine 140. Arginine 169 is an NAD(+) binding site. 195–196 lines the D-glyceraldehyde 3-phosphate pocket; that stretch reads HG. Glutamine 302 contacts NAD(+).

It belongs to the glyceraldehyde-3-phosphate dehydrogenase family. As to quaternary structure, homotetramer.

The protein localises to the cytoplasm. It catalyses the reaction D-glyceraldehyde 3-phosphate + phosphate + NADP(+) = (2R)-3-phospho-glyceroyl phosphate + NADPH + H(+). The enzyme catalyses D-glyceraldehyde 3-phosphate + phosphate + NAD(+) = (2R)-3-phospho-glyceroyl phosphate + NADH + H(+). Its pathway is carbohydrate degradation; glycolysis; pyruvate from D-glyceraldehyde 3-phosphate: step 1/5. This Pyrobaculum calidifontis (strain DSM 21063 / JCM 11548 / VA1) protein is Glyceraldehyde-3-phosphate dehydrogenase.